The chain runs to 88 residues: Translation initiation factor IF-1 1 (88 aa).

Residues 1–72 form the S1-like domain; sequence MSKEDMIELE…TKGRINFRHP (72 aa). The segment at 66–88 is disordered; sequence RINFRHPTANPGAGPRPSHHHRR.

This sequence belongs to the IF-1 family. As to quaternary structure, component of the 30S ribosomal translation pre-initiation complex which assembles on the 30S ribosome in the order IF-2 and IF-3, IF-1 and N-formylmethionyl-tRNA(fMet); mRNA recruitment can occur at any time during PIC assembly.

It is found in the cytoplasm. Functionally, one of the essential components for the initiation of protein synthesis. Stabilizes the binding of IF-2 and IF-3 on the 30S subunit to which N-formylmethionyl-tRNA(fMet) subsequently binds. Helps modulate mRNA selection, yielding the 30S pre-initiation complex (PIC). Upon addition of the 50S ribosomal subunit IF-1, IF-2 and IF-3 are released leaving the mature 70S translation initiation complex. The polypeptide is Translation initiation factor IF-1 1 (Chromobacterium violaceum (strain ATCC 12472 / DSM 30191 / JCM 1249 / CCUG 213 / NBRC 12614 / NCIMB 9131 / NCTC 9757 / MK)).